The chain runs to 571 residues: MRLHQSPPRLLVCILSVLQVSAGLSSNCRCMPGDSCWPSLNDWARFNTSIGGRLVDTQPLGQPCHDPFYTASECNELKQQWTHPELHDASSSSIMSAAVANETCDAFTPRSKPCTLGAMVRYAVNASSPDDFVQTIRFSQERNIRLVIRNTGHDYAGKSTGAGALSIWTHSLKEIDFLNYTSAHYTGPAVRMTAGIQGTDINPAAHKKGLVIVGGECATVGPVGGFTQGGGHSALSSRFGLAADQVLEWEVVDGMGRLLTASPTQNPDLYWALSGGGGGTFGVVYAVTVKTFPDFAVTGVVLQFENIDPSSNRFFEAVGHYHRHLPTYTSAGGMAIAQITNSSFLLTPLTLPAYTAAATKKLLGPFLQDLHQLNISYTLNVTESASYFQHYMKLIEPNPTQLVQNAQYGGRLLPLDLIERNNSQLTDAVQKLTADGVTFVGIGLNVSSSVTGDIWNSVLPGWRTAAMTVILTTSWPLGANLTKMKILADKMTTKWVPILTALSPESGCYMSEADPQQPDWKQTFYGRNYDSLYAIKTKYDPLQTFYATTAVGSEDWQVEAGGRLCQATRKN.

An N-terminal signal peptide occupies residues 1–23 (MRLHQSPPRLLVCILSVLQVSAG). 10 N-linked (GlcNAc...) asparagine glycosylation sites follow: N47, N101, N125, N179, N341, N374, N380, N421, N445, and N480. One can recognise an FAD-binding PCMH-type domain in the interval 115-294 (TLGAMVRYAV…YAVTVKTFPD (180 aa)).

Belongs to the oxygen-dependent FAD-linked oxidoreductase family. FAD is required as a cofactor.

Its subcellular location is the vacuole lumen. The protein operates within mycotoxin biosynthesis; patulin biosynthesis. In terms of biological role, FAD-linked oxidoreductase; part of the gene cluster that mediates the biosynthesis of patulin, an acetate-derived tetraketide mycotoxin produced by several fungal species that shows antimicrobial properties against several bacteria. PatO acts with patJ in the vacuole to convert gentisyl alcohol to isoepoxydon. The pathway begins with the synthesis of 6-methylsalicylic acid by the polyketide synthase (PKS) patK via condensation of acetate and malonate units. The 6-methylsalicylic acid decarboxylase patG then catalyzes the decarboxylation of 6-methylsalicylic acid to yield m-cresol (also known as 3-methylphenol). These first reactions occur in the cytosol. The intermediate m-cresol is then transported into the endoplasmic reticulum where the cytochrome P450 monooxygenase patH converts it to m-hydroxybenzyl alcohol, which is further converted to gentisyl alcohol by the cytochrome P450 monooxygenase patI. The oxidoreductases patJ and patO further convert gentisyl alcohol to isoepoxydon in the vacuole. PatN catalyzes then the transformation of isoepoxydon into phyllostine. The cluster protein patF is responsible for the conversion from phyllostine to neopatulin whereas the alcohol dehydrogenase patD converts neopatulin to E-ascladiol. The steps between isoepoxydon and E-ascladiol occur in the cytosol, and E-ascladiol is probably secreted to the extracellular space by one of the cluster-specific transporters patC or patM. Finally, the secreted patulin synthase patE catalyzes the conversion of E-ascladiol to patulin. In Penicillium expansum (Blue mold rot fungus), this protein is FAD-linked oxidoreductase patO.